The sequence spans 336 residues: Ferrochelatase (336 aa).

Residues His206 and Glu287 each coordinate Fe cation.

The protein belongs to the ferrochelatase family.

The protein resides in the cytoplasm. It carries out the reaction heme b + 2 H(+) = protoporphyrin IX + Fe(2+). It participates in porphyrin-containing compound metabolism; protoheme biosynthesis; protoheme from protoporphyrin-IX: step 1/1. Catalyzes the ferrous insertion into protoporphyrin IX. The sequence is that of Ferrochelatase from Neisseria meningitidis serogroup C / serotype 2a (strain ATCC 700532 / DSM 15464 / FAM18).